We begin with the raw amino-acid sequence, 133 residues long: Profilin-2 (133 aa).

Residues Cys13 and Cys117 are joined by a disulfide bond. The Involved in PIP2 interaction signature appears at 83 to 99 (AVIRGKKGSGGITIKKT). Position 113 is a phosphothreonine (Thr113).

Belongs to the profilin family. As to quaternary structure, occurs in many kinds of cells as a complex with monomeric actin in a 1:1 ratio. In terms of processing, phosphorylated by MAP kinases.

It localises to the cytoplasm. Its subcellular location is the cytoskeleton. Functionally, binds to actin and affects the structure of the cytoskeleton. At high concentrations, profilin prevents the polymerization of actin, whereas it enhances it at low concentrations. The chain is Profilin-2 from Betula pendula (European white birch).